Reading from the N-terminus, the 404-residue chain is Tryptophan synthase beta chain (404 aa).

N6-(pyridoxal phosphate)lysine is present on Lys-98.

Belongs to the TrpB family. As to quaternary structure, tetramer of two alpha and two beta chains. Requires pyridoxal 5'-phosphate as cofactor.

The catalysed reaction is (1S,2R)-1-C-(indol-3-yl)glycerol 3-phosphate + L-serine = D-glyceraldehyde 3-phosphate + L-tryptophan + H2O. It functions in the pathway amino-acid biosynthesis; L-tryptophan biosynthesis; L-tryptophan from chorismate: step 5/5. Its function is as follows. The beta subunit is responsible for the synthesis of L-tryptophan from indole and L-serine. This chain is Tryptophan synthase beta chain, found in Rhodopseudomonas palustris (strain HaA2).